The chain runs to 204 residues: Large ribosomal subunit protein bL25 (204 aa).

The protein belongs to the bacterial ribosomal protein bL25 family. CTC subfamily. In terms of assembly, part of the 50S ribosomal subunit; part of the 5S rRNA/L5/L18/L25 subcomplex. Contacts the 5S rRNA. Binds to the 5S rRNA independently of L5 and L18.

This is one of the proteins that binds to the 5S RNA in the ribosome where it forms part of the central protuberance. The protein is Large ribosomal subunit protein bL25 of Bordetella bronchiseptica (strain ATCC BAA-588 / NCTC 13252 / RB50) (Alcaligenes bronchisepticus).